Reading from the N-terminus, the 500-residue chain is Squalene epoxidase ERG1 (500 aa).

A helical transmembrane segment spans residues 20 to 40 (EADVVVVGAGVFGCTMAFALA). FAD contacts are provided by residues 30–31 (VF), 50–51 (ER), arginine 58, arginine 145, aspartate 332, and methionine 345. Helical transmembrane passes span 450 to 470 (AFLA…LGIF) and 474 to 494 (LAII…IPIM).

Belongs to the squalene monooxygenase family. It depends on FAD as a cofactor.

It is found in the microsome membrane. It localises to the endoplasmic reticulum membrane. The protein resides in the lipid droplet. It carries out the reaction squalene + reduced [NADPH--hemoprotein reductase] + O2 = (S)-2,3-epoxysqualene + oxidized [NADPH--hemoprotein reductase] + H2O + H(+). The protein operates within terpene metabolism; lanosterol biosynthesis; lanosterol from farnesyl diphosphate: step 2/3. It functions in the pathway steroid metabolism; ergosterol biosynthesis. Functionally, squalene epoxidase; part of the third module of ergosterol biosynthesis pathway that includes the late steps of the pathway. ERG1 catalyzes the epoxidation of squalene into 2,3-epoxysqualene. The third module or late pathway involves the ergosterol synthesis itself through consecutive reactions that mainly occur in the endoplasmic reticulum (ER) membrane. Firstly, the squalene synthase ERG9 catalyzes the condensation of 2 farnesyl pyrophosphate moieties to form squalene, which is the precursor of all steroids. Squalene synthase is crucial for balancing the incorporation of farnesyl diphosphate (FPP) into sterol and nonsterol isoprene synthesis. Secondly, squalene is converted into lanosterol by the consecutive action of the squalene epoxidase ERG1 and the lanosterol synthase ERG7. Then, the delta(24)-sterol C-methyltransferase ERG6 methylates lanosterol at C-24 to produce eburicol. Eburicol is the substrate of the sterol 14-alpha demethylase encoded by CYP51A, CYP51B and CYP51C, to yield 4,4,24-trimethyl ergosta-8,14,24(28)-trienol. CYP51B encodes the enzyme primarily responsible for sterol 14-alpha-demethylation, and plays an essential role in ascospore formation. CYP51A encodes an additional sterol 14-alpha-demethylase, induced on ergosterol depletion and responsible for the intrinsic variation in azole sensitivity. The third CYP51 isoform, CYP51C, does not encode a sterol 14-alpha-demethylase, but is required for full virulence on host wheat ears. The C-14 reductase ERG24 then reduces the C14=C15 double bond which leads to 4,4-dimethylfecosterol. A sequence of further demethylations at C-4, involving the C-4 demethylation complex containing the C-4 methylsterol oxidases ERG25, the sterol-4-alpha-carboxylate 3-dehydrogenase ERG26 and the 3-keto-steroid reductase ERG27, leads to the production of fecosterol via 4-methylfecosterol. ERG28 has a role as a scaffold to help anchor ERG25, ERG26 and ERG27 to the endoplasmic reticulum. The C-8 sterol isomerase ERG2 then catalyzes the reaction which results in unsaturation at C-7 in the B ring of sterols and thus converts fecosterol to episterol. The sterol-C5-desaturases ERG3A and ERG3BB then catalyze the introduction of a C-5 double bond in the B ring to produce 5-dehydroepisterol. The C-22 sterol desaturases ERG5A and ERG5B further convert 5-dehydroepisterol into ergosta-5,7,22,24(28)-tetraen-3beta-ol by forming the C-22(23) double bond in the sterol side chain. Finally, ergosta-5,7,22,24(28)-tetraen-3beta-ol is substrate of the C-24(28) sterol reductase ERG4 to produce ergosterol. This Gibberella zeae (strain ATCC MYA-4620 / CBS 123657 / FGSC 9075 / NRRL 31084 / PH-1) (Wheat head blight fungus) protein is Squalene epoxidase ERG1.